The primary structure comprises 505 residues: Flagellin (505 aa).

Belongs to the bacterial flagellin family.

The protein resides in the secreted. It is found in the bacterial flagellum. In terms of biological role, flagellin is the subunit protein which polymerizes to form the filaments of bacterial flagella. This Salmonella moscow protein is Flagellin (fliC).